The following is a 1271-amino-acid chain: Diacylglycerol kinase kappa (1271 aa).

The span at 1-15 shows a compositional bias: low complexity; the sequence is MDRGAAAAQGTAPPQ. Positions 1 to 160 are disordered; the sequence is MDRGAAAAQG…PEPTPEPVTE (160 aa). Positions 23-44 are enriched in pro residues; that stretch reads SPEPPPPWPPPPPPPAPPPAPP. Repeat copies occupy residues 48 to 51, 52 to 55, 56 to 59, 60 to 63, 64 to 67, 68 to 71, 72 to 75, 76 to 79, 80 to 83, 84 to 87, 88 to 91, 92 to 95, 96 to 99, 100 to 103, 104 to 107, 108 to 111, 112 to 115, 116 to 119, 120 to 123, 124 to 127, 128 to 131, 132 to 135, 136 to 139, 140 to 143, 144 to 147, 148 to 151, 152 to 155, 156 to 159, 160 to 163, 164 to 167, 168 to 171, 172 to 175, and 176 to 179. Positions 48–179 are 33 X 4 AA approximate tandem repeats of E-P-A-P; it reads EASPEPIPEP…APEFRPSPAP (132 aa). Residues 52–66 are compositionally biased toward pro residues; the sequence is EPIPEPCPELAPGPC. Y78 is subject to Phosphotyrosine. Pro residues predominate over residues 82 to 116; that stretch reads TPEPATEPASEPAPEPATEPAPEPATEPAPEPAPE. Over residues 139 to 149 the composition is skewed to low complexity; it reads PELTPEVAPEL. The interval 190-209 is disordered; the sequence is ERGLKTSPSPSPSPSPRTPM. The PH domain occupies 216 to 309; that stretch reads KILKEGPMLK…WINIIKTIQQ (94 aa). 2 Phorbol-ester/DAG-type zinc fingers span residues 327–377 and 398–449; these read MHCW…SKDC and PHQW…SKEC. The DAGKc domain occupies 487–622; that stretch reads ACSCPLLIFI…LDRWSVMIRE (136 aa). Disordered stretches follow at residues 805–825 and 1252–1271; these read DDPE…GTLS and RHRE…RSQL. The interval 1199–1268 is required for localization to the plasma membrane; it reads PIFVPEEKSS…EGDDPLTPSR (70 aa).

It belongs to the eukaryotic diacylglycerol kinase family. In terms of assembly, does not form homooligomers. Post-translationally, phosphorylated at Tyr-78 by some member of the SRC family in response to H(2)O(2). In terms of tissue distribution, expressed in testis, and to a lesser extent in placenta.

It is found in the cell membrane. It carries out the reaction a 1,2-diacyl-sn-glycerol + ATP = a 1,2-diacyl-sn-glycero-3-phosphate + ADP + H(+). The enzyme catalyses 1,2-di-(9Z-octadecenoyl)-sn-glycerol + ATP = 1,2-di-(9Z-octadecenoyl)-sn-glycero-3-phosphate + ADP + H(+). It functions in the pathway lipid metabolism; glycerolipid metabolism. With respect to regulation, inhibited in response to H(2)O(2). In terms of biological role, diacylglycerol kinase that converts diacylglycerol/DAG into phosphatidic acid/phosphatidate/PA and regulates the respective levels of these two bioactive lipids. Thereby, acts as a central switch between the signaling pathways activated by these second messengers with different cellular targets and opposite effects in numerous biological processes. The sequence is that of Diacylglycerol kinase kappa from Homo sapiens (Human).